Reading from the N-terminus, the 345-residue chain is MYDTIVIGAGQAGISVGYYLKKSKQKFIILDKSHEVGESWKNRYDSLVLFTSRMYSSLPGMQLEGDKHGLPSKNEIAAYLKKYVERFEIPIQLRTEVISVQKLKNYFLIKTNREEYQTKNLVMAAGPFHTPNIPSISRDVADHIHQLHSSQYKHSKQLAPGNVLVVGGGNSGAQIAVELSKERVTYLACSNKPVYFPLWIGKRSIFWWFDKLGVLHASHTSILGKFIQKKGDPIFGYELKHAIRQKKIILKQRVIAGKQNEMIFKDSSSLEVNNIIWATGFKNPLCWMKIEGVLDKEGRIIHHRGVSAVEGLYFIGLPWQHRRGSALLQGVGNDAEYIVKQMNGG.

The protein localises to the cell membrane. In terms of biological role, involved in potassium and divalent cation transport. Enhances the transport activity of the cation/potassium transporter CzcD. This is an uncharacterized protein from Bacillus velezensis (strain DSM 23117 / BGSC 10A6 / LMG 26770 / FZB42) (Bacillus amyloliquefaciens subsp. plantarum).